Reading from the N-terminus, the 247-residue chain is 2,3-bisphosphoglycerate-dependent phosphoglycerate mutase (247 aa).

Substrate contacts are provided by residues 8–15 (RHGESTWN), 21–22 (TG), R60, 87–90 (ERHY), K98, 114–115 (RR), and 183–184 (GN). H9 (tele-phosphohistidine intermediate) is an active-site residue. The Proton donor/acceptor role is filled by E87.

It belongs to the phosphoglycerate mutase family. BPG-dependent PGAM subfamily. In terms of assembly, homodimer.

It carries out the reaction (2R)-2-phosphoglycerate = (2R)-3-phosphoglycerate. It functions in the pathway carbohydrate degradation; glycolysis; pyruvate from D-glyceraldehyde 3-phosphate: step 3/5. In terms of biological role, catalyzes the interconversion of 2-phosphoglycerate and 3-phosphoglycerate. This is 2,3-bisphosphoglycerate-dependent phosphoglycerate mutase from Acidovorax sp. (strain JS42).